A 137-amino-acid chain; its full sequence is Fatty acid-binding protein homolog 8 (137 aa).

Residues 24-34 (KEIGVGLLIRK) carry the Nuclear localization signal motif.

It belongs to the calycin superfamily. Fatty-acid binding protein (FABP) family. Monomer. In terms of tissue distribution, intestine.

It localises to the lysosome. It is found in the nucleus. In terms of biological role, lysosomal lipid chaperone which binds to a wide range of unsaturated fatty acids, including high affinity binding to oleic acid and oleoylethanolamide, to transport them into the nucleus. As part of a lysosome-to-nucleus retrograde lipid signaling pathway, translocates into the nucleus where it activates the transcription of genes promoting longevity and activation of mitochondrial beta oxidation. This Caenorhabditis elegans protein is Fatty acid-binding protein homolog 8.